The sequence spans 85 residues: Cell division topological specificity factor (85 aa).

This sequence belongs to the MinE family.

Its function is as follows. Prevents the cell division inhibition by proteins MinC and MinD at internal division sites while permitting inhibition at polar sites. This ensures cell division at the proper site by restricting the formation of a division septum at the midpoint of the long axis of the cell. This Dechloromonas aromatica (strain RCB) protein is Cell division topological specificity factor.